Reading from the N-terminus, the 270-residue chain is 3-phenylpropionate-dihydrodiol/cinnamic acid-dihydrodiol dehydrogenase (270 aa).

Position 10 to 34 (10 to 34 (FITGGGSGLGLALVERFIEEGAQVA)) interacts with NAD(+). Ser143 is a substrate binding site. Tyr156 acts as the Proton acceptor in catalysis.

Belongs to the short-chain dehydrogenases/reductases (SDR) family.

The catalysed reaction is 3-(cis-5,6-dihydroxycyclohexa-1,3-dien-1-yl)propanoate + NAD(+) = 3-(2,3-dihydroxyphenyl)propanoate + NADH + H(+). It carries out the reaction (2E)-3-(cis-5,6-dihydroxycyclohexa-1,3-dien-1-yl)prop-2-enoate + NAD(+) = (2E)-3-(2,3-dihydroxyphenyl)prop-2-enoate + NADH + H(+). Its pathway is aromatic compound metabolism; 3-phenylpropanoate degradation. Its function is as follows. Converts 3-phenylpropionate-dihydrodiol (PP-dihydrodiol) and cinnamic acid-dihydrodiol (CI-dihydrodiol) into 3-(2,3-dihydroxylphenyl)propanoic acid (DHPP) and 2,3-dihydroxicinnamic acid (DHCI), respectively. This Escherichia coli (strain ATCC 8739 / DSM 1576 / NBRC 3972 / NCIMB 8545 / WDCM 00012 / Crooks) protein is 3-phenylpropionate-dihydrodiol/cinnamic acid-dihydrodiol dehydrogenase.